A 439-amino-acid chain; its full sequence is Mitochondrial distribution and morphology protein 12 (439 aa).

An SMP-LTD domain is found at 1-439 (MSIDINWEAA…VYPSFWTFLV (439 aa)). Positions 71-84 (EEDEGDEDFSDDQD) are enriched in acidic residues. Disordered regions lie at residues 71-104 (EEDE…GTWQ), 182-278 (TPLA…HEKK), and 362-385 (YIPG…RRDD). Residues 212 to 229 (DYPRPVHRQTDTDIDSGH) show a composition bias toward basic and acidic residues. The span at 230-255 (SRPSTADTLNSINSQRISNPALSHPH) shows a compositional bias: polar residues. Residues 256–269 (SSNESHPDTRDHSP) show a composition bias toward basic and acidic residues.

Belongs to the MDM12 family. Component of the ER-mitochondria encounter structure (ERMES) or MDM complex, composed of MMM1, MDM10, MDM12 and MDM34. An MMM1 homodimer associates with one molecule of MDM12 on each side in a pairwise head-to-tail manner, and the SMP-LTD domains of MMM1 and MDM12 generate a continuous hydrophobic tunnel for phospholipid trafficking.

The protein resides in the mitochondrion outer membrane. It localises to the endoplasmic reticulum membrane. In terms of biological role, component of the ERMES/MDM complex, which serves as a molecular tether to connect the endoplasmic reticulum (ER) and mitochondria. Components of this complex are involved in the control of mitochondrial shape and protein biogenesis, and function in nonvesicular lipid trafficking between the ER and mitochondria. MDM12 is required for the interaction of the ER-resident membrane protein MMM1 and the outer mitochondrial membrane-resident beta-barrel protein MDM10. The MDM12-MMM1 subcomplex functions in the major beta-barrel assembly pathway that is responsible for biogenesis of all mitochondrial outer membrane beta-barrel proteins, and acts in a late step after the SAM complex. The MDM10-MDM12-MMM1 subcomplex further acts in the TOM40-specific pathway after the action of the MDM12-MMM1 complex. Essential for establishing and maintaining the structure of mitochondria and maintenance of mtDNA nucleoids. This chain is Mitochondrial distribution and morphology protein 12, found in Uncinocarpus reesii (strain UAMH 1704).